Here is an 880-residue protein sequence, read N- to C-terminus: Alanine--tRNA ligase (880 aa).

The segment at 414–443 (TVDESEFESEMEKQRNRARKARSGGDTEGW) is disordered. Positions 566, 570, 668, and 672 each coordinate Zn(2+).

This sequence belongs to the class-II aminoacyl-tRNA synthetase family. Zn(2+) is required as a cofactor.

Its subcellular location is the cytoplasm. It catalyses the reaction tRNA(Ala) + L-alanine + ATP = L-alanyl-tRNA(Ala) + AMP + diphosphate. Its function is as follows. Catalyzes the attachment of alanine to tRNA(Ala) in a two-step reaction: alanine is first activated by ATP to form Ala-AMP and then transferred to the acceptor end of tRNA(Ala). Also edits incorrectly charged Ser-tRNA(Ala) and Gly-tRNA(Ala) via its editing domain. In Alkaliphilus metalliredigens (strain QYMF), this protein is Alanine--tRNA ligase.